Here is a 278-residue protein sequence, read N- to C-terminus: D-arabinitol 2-dehydrogenase [ribulose-forming] (278 aa).

NADP(+)-binding residues include Leu28 and Asn49. Ser166 functions as the Proton donor in the catalytic mechanism. Tyr181, Lys185, Ile214, and Thr216 together coordinate NADP(+). The active-site Proton acceptor is the Tyr181. The Lowers pKa of active site Tyr role is filled by Lys185.

This sequence belongs to the short-chain dehydrogenases/reductases (SDR) family.

The enzyme catalyses D-arabinitol + NAD(+) = D-ribulose + NADH + H(+). Its pathway is carbohydrate metabolism; D-arabinitol metabolism. This is D-arabinitol 2-dehydrogenase [ribulose-forming] (ARDH) from Scheffersomyces stipitis (strain ATCC 58785 / CBS 6054 / NBRC 10063 / NRRL Y-11545) (Yeast).